Consider the following 307-residue polypeptide: MAVQKYTVALFLAVALVAGPAASYAADAGYTPAAAATPATPAATPAAAGGKATTDEQKLLEDVNAGFKAAVAAAANAPPADKFKIFEAAFSESSKGLLATSAAKAPGLIPKLDTAYDVAYKAAEATPEAKYDAFVTALTEALRVIAGALEVHAVKPATEEVLAAKIPTGELQIVDKIDAAFKIAATAANAAPTNDKFTVFESAFNKALNECTGGAYETYKFIPSLEAAVKQAYAATVAAAPEVKYAVFEAALTKAITAMTQAQKAGKPAAAAATAAATVATAAATAAAVLPPPLLVVQSLISLLIYY.

The first 25 residues, 1–25 (MAVQKYTVALFLAVALVAGPAASYA), serve as a signal peptide directing secretion.

Belongs to the Poa p IX/Phl p VI allergen family. In terms of tissue distribution, pollen, starch granules.

The chain is Major pollen allergen Lol p 5a (LOLPIB) from Lolium perenne (Perennial ryegrass).